The following is a 108-amino-acid chain: Integration host factor subunit alpha (108 aa).

Belongs to the bacterial histone-like protein family. As to quaternary structure, heterodimer of an alpha and a beta chain.

This protein is one of the two subunits of integration host factor, a specific DNA-binding protein that functions in genetic recombination as well as in transcriptional and translational control. In Methylorubrum extorquens (strain CM4 / NCIMB 13688) (Methylobacterium extorquens), this protein is Integration host factor subunit alpha.